A 222-amino-acid chain; its full sequence is Protein GrpE (222 aa).

Disordered regions lie at residues 1–21 (MNDGFAMNTHSKDERAPENGQ) and 200–222 (KGGPKAETPAATSEQAAQGPEGA).

Belongs to the GrpE family. Homodimer.

Its subcellular location is the cytoplasm. Participates actively in the response to hyperosmotic and heat shock by preventing the aggregation of stress-denatured proteins, in association with DnaK and GrpE. It is the nucleotide exchange factor for DnaK and may function as a thermosensor. Unfolded proteins bind initially to DnaJ; upon interaction with the DnaJ-bound protein, DnaK hydrolyzes its bound ATP, resulting in the formation of a stable complex. GrpE releases ADP from DnaK; ATP binding to DnaK triggers the release of the substrate protein, thus completing the reaction cycle. Several rounds of ATP-dependent interactions between DnaJ, DnaK and GrpE are required for fully efficient folding. The polypeptide is Protein GrpE (Chelativorans sp. (strain BNC1)).